The following is a 427-amino-acid chain: UDP-N-acetylglucosamine 1-carboxyvinyltransferase (427 aa).

22 to 23 serves as a coordination point for phosphoenolpyruvate; it reads KN. R92 lines the UDP-N-acetyl-alpha-D-glucosamine pocket. D116 acts as the Proton donor in catalysis. D312 and M334 together coordinate UDP-N-acetyl-alpha-D-glucosamine.

Belongs to the EPSP synthase family. MurA subfamily.

The protein resides in the cytoplasm. It carries out the reaction phosphoenolpyruvate + UDP-N-acetyl-alpha-D-glucosamine = UDP-N-acetyl-3-O-(1-carboxyvinyl)-alpha-D-glucosamine + phosphate. The protein operates within cell wall biogenesis; peptidoglycan biosynthesis. In terms of biological role, cell wall formation. Adds enolpyruvyl to UDP-N-acetylglucosamine. The protein is UDP-N-acetylglucosamine 1-carboxyvinyltransferase of Borrelia garinii subsp. bavariensis (strain ATCC BAA-2496 / DSM 23469 / PBi) (Borreliella bavariensis).